The sequence spans 393 residues: Arginine biosynthesis bifunctional protein ArgJ (393 aa).

Residues T142, K168, T179, E265, N388, and S393 each contribute to the substrate site. Residue T179 is the Nucleophile of the active site.

It belongs to the ArgJ family. In terms of assembly, heterotetramer of two alpha and two beta chains.

The protein resides in the cytoplasm. It carries out the reaction N(2)-acetyl-L-ornithine + L-glutamate = N-acetyl-L-glutamate + L-ornithine. It catalyses the reaction L-glutamate + acetyl-CoA = N-acetyl-L-glutamate + CoA + H(+). It functions in the pathway amino-acid biosynthesis; L-arginine biosynthesis; L-ornithine and N-acetyl-L-glutamate from L-glutamate and N(2)-acetyl-L-ornithine (cyclic): step 1/1. The protein operates within amino-acid biosynthesis; L-arginine biosynthesis; N(2)-acetyl-L-ornithine from L-glutamate: step 1/4. Catalyzes two activities which are involved in the cyclic version of arginine biosynthesis: the synthesis of N-acetylglutamate from glutamate and acetyl-CoA as the acetyl donor, and of ornithine by transacetylation between N(2)-acetylornithine and glutamate. The protein is Arginine biosynthesis bifunctional protein ArgJ of Desulfotalea psychrophila (strain LSv54 / DSM 12343).